A 238-amino-acid chain; its full sequence is MKLYPAIDLLNGKSVRLTQGDYDQVSLTEDPLYQAQRLTDAGFAHLHLVDLDGARAQRPINRTVITRIREQTSAFIELGGGIRTLAAMEIYLTIGIDRLILGSAAVSDPDLVEQAIARFGSNRIAVGIDTRAGKVATNGWLTTSQQTANALLTAMQQRGVTTFIVTDIAKDGMMQGPNAQLLADLQQAMPQATIIASGGISLLADLHRLQTAGIQAAIIGKAWQTGAIELAMLKQMEG.

D8 serves as the catalytic Proton acceptor. Residue D129 is the Proton donor of the active site.

The protein belongs to the HisA/HisF family.

The protein resides in the cytoplasm. It carries out the reaction 1-(5-phospho-beta-D-ribosyl)-5-[(5-phospho-beta-D-ribosylamino)methylideneamino]imidazole-4-carboxamide = 5-[(5-phospho-1-deoxy-D-ribulos-1-ylimino)methylamino]-1-(5-phospho-beta-D-ribosyl)imidazole-4-carboxamide. Its pathway is amino-acid biosynthesis; L-histidine biosynthesis; L-histidine from 5-phospho-alpha-D-ribose 1-diphosphate: step 4/9. The protein is 1-(5-phosphoribosyl)-5-[(5-phosphoribosylamino)methylideneamino] imidazole-4-carboxamide isomerase of Lacticaseibacillus paracasei (strain ATCC 334 / BCRC 17002 / CCUG 31169 / CIP 107868 / KCTC 3260 / NRRL B-441) (Lactobacillus paracasei).